The sequence spans 688 residues: Translation initiation factor IF-2 (688 aa).

The tract at residues 54-95 is disordered; the sequence is KEKSEKTKEEDDEIETTAKNPIKESTNNKKPNKRDDKNEKVN. Basic and acidic residues predominate over residues 86 to 95; the sequence is KRDDKNEKVN. The tr-type G domain occupies 187–354; it reads KRSPIITVMG…MILLSSEILE (168 aa). A G1 region spans residues 196-203; sequence GHVDHGKT. 196–203 contributes to the GTP binding site; sequence GHVDHGKT. Residues 221–225 are G2; that stretch reads GITQH. Residues 242 to 245 form a G3 region; the sequence is DTPG. GTP-binding positions include 242-246 and 296-299; these read DTPGH and NKID. The tract at residues 296–299 is G4; it reads NKID. A G5 region spans residues 332–334; sequence SAH.

The protein belongs to the TRAFAC class translation factor GTPase superfamily. Classic translation factor GTPase family. IF-2 subfamily.

Its subcellular location is the cytoplasm. One of the essential components for the initiation of protein synthesis. Protects formylmethionyl-tRNA from spontaneous hydrolysis and promotes its binding to the 30S ribosomal subunits. Also involved in the hydrolysis of GTP during the formation of the 70S ribosomal complex. The chain is Translation initiation factor IF-2 from Clostridium botulinum (strain Okra / Type B1).